A 330-amino-acid chain; its full sequence is MKLKVFNVREEEATLAQDWANRNHVELSMSEGPLTLETVNEVEGFDGIANAQIEPLDDAIYPLLKEMGIKQIAQRSAGVDMYNLELAKQHGIIISNVPSYSPESIAEFTVTIALNLIRKVELIRANVREQNFSWTLPIRGRVLGNMTVAIIGTGRIGLATAKIFKGFGCRVIGYDIYHNPMADGILEYVNSVEEAVEEADLVSLHMPPTAENTHLFNLDMFKQFKKGAILMNMARGALVETKDLLEALDQGLLEGAGIDTYEFEGPYIPKNCQGQDISDKDFLRLINHPKVIYTPHAAYYTDEAVKNLVEGALNACVEVIETGTTTTKVN.

Residues 155 to 156, Asp175, 206 to 207, Asn212, 233 to 235, and Asp259 contribute to the NAD(+) site; these read RI, MP, and MAR. Residue Arg235 is part of the active site. Glu264 is a catalytic residue. His296 (proton donor) is an active-site residue.

The protein belongs to the D-isomer specific 2-hydroxyacid dehydrogenase family.

It carries out the reaction (R)-lactate + NAD(+) = pyruvate + NADH + H(+). The sequence is that of D-lactate dehydrogenase (ldhD) from Streptococcus agalactiae serotype V (strain ATCC BAA-611 / 2603 V/R).